Here is a 372-residue protein sequence, read N- to C-terminus: Protein-glutamate methylesterase/protein-glutamine glutaminase 1 (372 aa).

Residues 4–121 enclose the Response regulatory domain; the sequence is KVLVVDDSSF…ATNKDDAILL (118 aa). Residue D55 is modified to 4-aspartylphosphate. The interval 138–174 is disordered; that stretch reads VVRPTTPTPPPRSSASSVLGGVSTHTQPAPVRSSHAA. The CheB-type methylesterase domain maps to 179–372; it reads SGKQYKLLLI…ESILKESARG (194 aa). Residues S191, H218, and D314 contribute to the active site.

Belongs to the CheB family. In terms of processing, phosphorylated by CheA. Phosphorylation of the N-terminal regulatory domain activates the methylesterase activity.

It is found in the cytoplasm. It carries out the reaction [protein]-L-glutamate 5-O-methyl ester + H2O = L-glutamyl-[protein] + methanol + H(+). The enzyme catalyses L-glutaminyl-[protein] + H2O = L-glutamyl-[protein] + NH4(+). Involved in chemotaxis. Part of a chemotaxis signal transduction system that modulates chemotaxis in response to various stimuli. Catalyzes the demethylation of specific methylglutamate residues introduced into the chemoreceptors (methyl-accepting chemotaxis proteins or MCP) by CheR. Also mediates the irreversible deamidation of specific glutamine residues to glutamic acid. This is Protein-glutamate methylesterase/protein-glutamine glutaminase 1 from Shewanella sp. (strain MR-4).